Reading from the N-terminus, the 244-residue chain is Phosphoadenosine 5'-phosphosulfate reductase (244 aa).

The active-site Nucleophile; cysteine thiosulfonate intermediate is the C239.

Belongs to the PAPS reductase family. CysH subfamily.

The protein localises to the cytoplasm. It catalyses the reaction [thioredoxin]-disulfide + sulfite + adenosine 3',5'-bisphosphate + 2 H(+) = [thioredoxin]-dithiol + 3'-phosphoadenylyl sulfate. It participates in sulfur metabolism; hydrogen sulfide biosynthesis; sulfite from sulfate: step 3/3. Catalyzes the formation of sulfite from phosphoadenosine 5'-phosphosulfate (PAPS) using thioredoxin as an electron donor. In Escherichia coli O157:H7, this protein is Phosphoadenosine 5'-phosphosulfate reductase.